We begin with the raw amino-acid sequence, 251 residues long: Segregation and condensation protein A (251 aa).

Belongs to the ScpA family. In terms of assembly, component of a cohesin-like complex composed of ScpA, ScpB and the Smc homodimer, in which ScpA and ScpB bind to the head domain of Smc. The presence of the three proteins is required for the association of the complex with DNA.

The protein resides in the cytoplasm. Functionally, participates in chromosomal partition during cell division. May act via the formation of a condensin-like complex containing Smc and ScpB that pull DNA away from mid-cell into both cell halves. The polypeptide is Segregation and condensation protein A (Bacillus velezensis (strain DSM 23117 / BGSC 10A6 / LMG 26770 / FZB42) (Bacillus amyloliquefaciens subsp. plantarum)).